The primary structure comprises 190 residues: RING finger protein 227 (190 aa).

The segment at 18-81 adopts an RING-type zinc-finger fold; sequence CNICYRPFNL…RRVVTCPFCR (64 aa). The segment at 111–145 is disordered; sequence KCERDEAGNPAKESSDADGEAEEEGESEKGAGPRS. Over residues 126–136 the composition is skewed to acidic residues; the sequence is DADGEAEEEGE.

This is RING finger protein 227 from Homo sapiens (Human).